A 362-amino-acid polypeptide reads, in one-letter code: Peptide chain release factor 1 (362 aa).

Glutamine 235 bears the N5-methylglutamine mark.

The protein belongs to the prokaryotic/mitochondrial release factor family. In terms of processing, methylated by PrmC. Methylation increases the termination efficiency of RF1.

Its subcellular location is the cytoplasm. In terms of biological role, peptide chain release factor 1 directs the termination of translation in response to the peptide chain termination codons UAG and UAA. The polypeptide is Peptide chain release factor 1 (Acinetobacter baumannii (strain ACICU)).